The following is a 152-amino-acid chain: Protein-export protein SecB (152 aa).

The protein belongs to the SecB family. In terms of assembly, homotetramer, a dimer of dimers. One homotetramer interacts with 1 SecA dimer.

Its subcellular location is the cytoplasm. In terms of biological role, one of the proteins required for the normal export of preproteins out of the cell cytoplasm. It is a molecular chaperone that binds to a subset of precursor proteins, maintaining them in a translocation-competent state. It also specifically binds to its receptor SecA. This Rickettsia peacockii (strain Rustic) protein is Protein-export protein SecB.